Consider the following 376-residue polypeptide: MADYWKSQPKKFCDYCKCWIADNRPSVEFHERGKNHKENVARRISEIKQKSLDKAKEEEKASKEFAAMEAAALKAYQEDLKRLGLPLPSDISEPTVSPVISTVQPTPTSNQQKEKKKKKKKKEASKGGWVEGVTADGHCYYYDLITGASQWEKPEGFQGNLKKTAAKAVWVEGLSEDGYTYYYNTETGESKWEKPEDFIPHGGDVLSSKDSGKLPDTLEDAKSSDSHSDSEGEQKKAGEASTETKKLIIKFKEKNKSTEKRIGPEIQKEKSTPKQNPSNTNEEKPKTLKKSTNPYGEWQEIKQEAESQEEVDLELPSTEGECLSTSEAGVGEIKVVFKEKTVSSLGVAADGVAPVFKKRRLENGKSRNLRQRGDDE.

The Matrin-type zinc finger occupies 11-42; it reads KFCDYCKCWIADNRPSVEFHERGKNHKENVAR. Positions 94-111 are enriched in polar residues; the sequence is PTVSPVISTVQPTPTSNQ. 2 disordered regions span residues 94–127 and 192–324; these read PTVS…ASKG and WEKP…ECLS. Residues 114-123 are compositionally biased toward basic residues; sequence EKKKKKKKKE. 2 WW domains span residues 123 to 156 and 164 to 197; these read EASK…KPEG and TAAK…KPED. Residues 219–272 show a composition bias toward basic and acidic residues; it reads EDAKSSDSHSDSEGEQKKAGEASTETKKLIIKFKEKNKSTEKRIGPEIQKEKST. 2 positions are modified to phosphoserine: Ser-228 and Ser-230. The interaction with SNRNP200 stretch occupies residues 357 to 375; the sequence is KKRRLENGKSRNLRQRGDD.

Component of the spliceosome B complex. Associated with U2 snRNPs. Binds splicing factors SNRPB, SNRPC and SF1. Interacts via the WW domains with the Pro-rich domains of KHDRBS1/SAM68. Interacts via the WW domains with the Pro-rich domains of WBP11. Interacts with SNRNP200.

It localises to the nucleus. The protein resides in the nucleus speckle. Functionally, involved in pre-mRNA splicing as a component of the spliceosome. May play a role in cross-intron bridging of U1 and U2 snRNPs in the mammalian A complex. The chain is WW domain-binding protein 4 (Wbp4) from Mus musculus (Mouse).